The chain runs to 140 residues: Pro-vaccinia growth factor (140 aa).

Residues 1-18 form the signal peptide; sequence MLINYLMLLFAAMIIRSF. At 19–100 the chain is on the extracellular side; that stretch reads ADSGNAIETT…SEKPNTTTSY (82 aa). Residue asparagine 34 is glycosylated (N-linked (GlcNAc...) asparagine; by host). The 41-residue stretch at 41–81 folds into the EGF-like domain; that stretch reads AIRLCGPEGDGYCLHGDCIHARDIDGMYCRCSHGYTGIRCQ. Disulfide bonds link cysteine 45/cysteine 58, cysteine 53/cysteine 69, and cysteine 71/cysteine 80. Residue asparagine 95 is glycosylated (N-linked (GlcNAc...) asparagine; by host). Residues 101 to 121 traverse the membrane as a helical segment; it reads IPSPGIMLVLVGIIIITCCLL. The Cytoplasmic segment spans residues 122–140; sequence SVYRFTRRTKLPLQDMVVP.

The protein belongs to the orthopoxvirus OPG019 family. Vaccinia growth factor interacts with host EGFR and promotes EGFR dimerization.

It is found in the host membrane. Its subcellular location is the secreted. Stimulates cellular proliferation (hyperplasia)and mobility around infected cells to promote rapid and efficient spread of infection. This effect is beneficial for virus replication in vivo, because poxviruses replicate possibly better in proliferating cells than in quiescent cells. Acts by binding host EGFR, inducing its dimerization, autophosphorylation and leading to activation of several cellular pathways regulating cell proliferation or cell survival. The activation by host EGFR of mitogen activated protein kinases (MAPK) and extracellular-signal regulated kinases (ERK) are essential for the positive effect of vaccinia growth factor on poxvirus virulence in vivo. The sequence is that of Pro-vaccinia growth factor (OPG019) from Homo sapiens (Human).